The following is a 357-amino-acid chain: MKFVDEAFIDVAAGDGGNGCVSFRHEKYKEFGGPNGGDGGRGGHVFAVADPNLNTLVDFRYSRRHEAKRGEHGMGSDMFGAAGADITLKMPVGTIISDADTGELLYELLTPGEVVTIAKGGDGGFGNLRFKSAINRAPRQKTPGWPGERKSLKLELKVLADVGLLGMPNAGKSTFIAAVSNARPKIADYPFTTLHPNLGVVRVGPEQSFVVADIPGLIEGASEGAGLGHQFLRHLQRTRLLLHVVDMAPFDESVDPVAQAKAIVAELKKYDTQLYEKPRWLVLNKLDMVPAEERAARVKDFVKRFKWKGPVFEISALTREGCEPLVQSIFQHVHAQQLAQNAPAEVDPRFAGEPPRG.

Positions 1–159 (MKFVDEAFID…KSLKLELKVL (159 aa)) constitute an Obg domain. An OBG-type G domain is found at 160 to 334 (ADVGLLGMPN…LVQSIFQHVH (175 aa)). GTP-binding positions include 166–173 (GMPNAGKS), 191–195 (FTTLH), 213–216 (DIPG), 284–287 (NKLD), and 315–317 (SAL). Mg(2+)-binding residues include serine 173 and threonine 193.

Belongs to the TRAFAC class OBG-HflX-like GTPase superfamily. OBG GTPase family. Monomer. The cofactor is Mg(2+).

The protein resides in the cytoplasm. In terms of biological role, an essential GTPase which binds GTP, GDP and possibly (p)ppGpp with moderate affinity, with high nucleotide exchange rates and a fairly low GTP hydrolysis rate. Plays a role in control of the cell cycle, stress response, ribosome biogenesis and in those bacteria that undergo differentiation, in morphogenesis control. This chain is GTPase Obg, found in Acidovorax sp. (strain JS42).